A 359-amino-acid chain; its full sequence is Peptide chain release factor 1 (359 aa).

Glutamine 235 is modified (N5-methylglutamine).

This sequence belongs to the prokaryotic/mitochondrial release factor family. Methylated by PrmC. Methylation increases the termination efficiency of RF1.

It localises to the cytoplasm. In terms of biological role, peptide chain release factor 1 directs the termination of translation in response to the peptide chain termination codons UAG and UAA. The polypeptide is Peptide chain release factor 1 (Anaplasma marginale (strain Florida)).